We begin with the raw amino-acid sequence, 689 residues long: Protein asunder (689 aa).

A coiled-coil region spans residues 521 to 550 (NGARLKLSKAKDQYRLLYRELEQLIQLNAT). 2 disordered regions span residues 592–619 (PERL…SKRR) and 665–689 (GTKD…SVRS). A compositionally biased stretch (low complexity) spans 599-614 (SSVGASGSSSSNSLLK). Positions 613-619 (LKASKRR) match the Nuclear localization signal (NLS) motif.

The protein belongs to the Integrator subunit 13 family. Belongs to the multiprotein complex Integrator, at least composed of IntS1, IntS2, IntS3, IntS4, omd/IntS5, IntS6, defl/IntS7, IntS8, IntS9, IntS10, IntS11, IntS12, asun/IntS13, IntS14 and IntS15. The core complex associates with protein phosphatase 2A subunits mts/PP2A and Pp2A-29B, to form the Integrator-PP2A (INTAC) complex. Post-translationally, phosphorylated. In terms of tissue distribution, expressed in nurse cells at stages 9-10 of oogenesis and exported to the oocyte. Also expressed in the follicle cells surrounding the oocyte.

Its subcellular location is the nucleus. It is found in the cytoplasm. The protein localises to the perinuclear region. Functionally, component of the integrator complex, a multiprotein complex that terminates RNA polymerase II (Pol II) transcription in the promoter-proximal region of genes. The integrator complex provides a quality checkpoint during transcription elongation by driving premature transcription termination of transcripts that are unfavorably configured for transcriptional elongation: the complex terminates transcription by (1) catalyzing dephosphorylation of the C-terminal domain (CTD) of Pol II subunit Polr2A/Rbp1 and Spt5, and (2) degrading the exiting nascent RNA transcript via endonuclease activity. The integrator complex is also involved in the 3'-end processing of the U7 snRNA, and also the spliceosomal snRNAs U1, U2, U4 and U5. Plays a role as a regulator of spermatogenesis. Crucial regulator of the mitotic cell cycle and development. Required for the correct dynein-dynactin perinuclear localization important for nucleus-centrosome coupling that occur upon meiotic progression of primary spermatocytes. Plays a role in sperm motility and fertility. May have a role in the PNG/PLU/GNU pathway. The chain is Protein asunder from Drosophila melanogaster (Fruit fly).